A 389-amino-acid polypeptide reads, in one-letter code: snRNA-activating protein complex subunit 1 (389 aa).

Residues 1-15 (MGTPAGAGTRPTGAG) are compositionally biased toward low complexity. Disordered stretches follow at residues 1 to 22 (MGTP…GVGI), 245 to 276 (WHKE…ERCE), and 290 to 389 (SAVV…KRKC). The interval 20-187 (VGIPPGLQTD…QKFKDPNDRV (168 aa)) is SNAPC3-binding. Residues 183-287 (PNDRVMKLIT…AVSLAKIKAK (105 aa)) are SNAPC4-binding. Positions 245–262 (WHKERKNPSLKPKLKDGE) are enriched in basic and acidic residues. Phosphoserine is present on residues Ser308 and Ser309.

As to quaternary structure, part of the SNAPc complex composed of 5 subunits: SNAPC1, SNAPC2, SNAPC3, SNAPC4 and SNAPC5. SNAPC1 interacts with SNAPC3, SNAPC4 and TBP.

It localises to the nucleus. Functionally, part of the SNAPc complex required for the transcription of both RNA polymerase II and III small-nuclear RNA genes. Binds to the proximal sequence element (PSE), a non-TATA-box basal promoter element common to these 2 types of genes. Recruits TBP and BRF2 to the U6 snRNA TATA box. This chain is snRNA-activating protein complex subunit 1 (Snapc1), found in Mus musculus (Mouse).